The primary structure comprises 238 residues: NADH-quinone oxidoreductase subunit C (238 aa).

The span at 1–11 (MSTSNGSANGT) shows a compositional bias: polar residues. The interval 1 to 20 (MSTSNGSANGTNGVGLPRGD) is disordered.

Belongs to the complex I 30 kDa subunit family. In terms of assembly, NDH-1 is composed of 14 different subunits. Subunits NuoB, C, D, E, F, and G constitute the peripheral sector of the complex.

It localises to the cell membrane. It catalyses the reaction a quinone + NADH + 5 H(+)(in) = a quinol + NAD(+) + 4 H(+)(out). NDH-1 shuttles electrons from NADH, via FMN and iron-sulfur (Fe-S) centers, to quinones in the respiratory chain. The immediate electron acceptor for the enzyme in this species is believed to be a menaquinone. Couples the redox reaction to proton translocation (for every two electrons transferred, four hydrogen ions are translocated across the cytoplasmic membrane), and thus conserves the redox energy in a proton gradient. This chain is NADH-quinone oxidoreductase subunit C, found in Mycolicibacterium smegmatis (strain ATCC 700084 / mc(2)155) (Mycobacterium smegmatis).